Consider the following 493-residue polypeptide: Cytochrome P450 2E1 (493 aa).

298 to 303 (FAGTET) lines the substrate pocket. Heme is bound at residue cysteine 437.

The protein belongs to the cytochrome P450 family. As to quaternary structure, interacts with chaperones HSP70 and HSP90; this interaction is required for initial targeting to mitochondria. Heme is required as a cofactor. In terms of tissue distribution, highest level in the liver and to a lesser extent in the kidney, with a higher level in the male kidney than in the female.

It is found in the endoplasmic reticulum membrane. It localises to the microsome membrane. Its subcellular location is the mitochondrion inner membrane. The enzyme catalyses an organic molecule + reduced [NADPH--hemoprotein reductase] + O2 = an alcohol + oxidized [NADPH--hemoprotein reductase] + H2O + H(+). The catalysed reaction is (5Z,8Z,11Z)-eicosatrienoate + reduced [NADPH--hemoprotein reductase] + O2 = 19-hydroxy-(5Z,8Z,11Z)-eicosatrienoate + oxidized [NADPH--hemoprotein reductase] + H2O + H(+). It catalyses the reaction (5Z,8Z,11Z,14Z,17Z)-eicosapentaenoate + reduced [NADPH--hemoprotein reductase] + O2 = 19-hydroxy-(5Z,8Z,11Z,14Z,17Z)-eicosapentaenoate + oxidized [NADPH--hemoprotein reductase] + H2O + H(+). It carries out the reaction (4Z,7Z,10Z,13Z,16Z,19Z)-docosahexaenoate + reduced [NADPH--hemoprotein reductase] + O2 = 21-hydroxy-(4Z,7Z,10Z,13Z,16Z,19Z)-docosahexaenoate + oxidized [NADPH--hemoprotein reductase] + H2O + H(+). The enzyme catalyses dodecanoate + reduced [NADPH--hemoprotein reductase] + O2 = 11-hydroxydodecanoate + oxidized [NADPH--hemoprotein reductase] + H2O + H(+). The catalysed reaction is tetradecanoate + reduced [NADPH--hemoprotein reductase] + O2 = 13-hydroxytetradecanoate + oxidized [NADPH--hemoprotein reductase] + H2O + H(+). It catalyses the reaction 4-nitrophenol + NADPH + O2 + H(+) = 4-nitrocatechol + NADP(+) + H2O. Its pathway is lipid metabolism; fatty acid metabolism. The omega-1 hydroxylase activity is stimulated by cytochrome b5. A cytochrome P450 monooxygenase involved in the metabolism of fatty acids. Mechanistically, uses molecular oxygen inserting one oxygen atom into a substrate, and reducing the second into a water molecule, with two electrons provided by NADPH via cytochrome P450 reductase (NADPH--hemoprotein reductase). Catalyzes the hydroxylation of carbon-hydrogen bonds. Hydroxylates fatty acids specifically at the omega-1 position displaying the highest catalytic activity for saturated fatty acids. May be involved in the oxidative metabolism of xenobiotics. The protein is Cytochrome P450 2E1 (Cyp2e1) of Mus musculus (Mouse).